The chain runs to 71 residues: Disintegrin applaggin (71 aa).

A Disintegrin domain is found at 1–71 (EAGEECDCGS…SAGCPRNPFH (71 aa)). Cystine bridges form between Cys-6–Cys-21, Cys-8–Cys-16, Cys-15–Cys-38, Cys-29–Cys-35, Cys-34–Cys-58, and Cys-47–Cys-65. Residues 50-52 (RGD) carry the Cell attachment site motif.

The protein belongs to the venom metalloproteinase (M12B) family. P-II subfamily. P-IIa sub-subfamily. Monomer (disintegrin). Expressed by the venom gland.

The protein resides in the secreted. Its function is as follows. Inhibits fibrinogen interaction with platelets. Acts by binding to alpha-IIb/beta-3 (ITGA2B/ITGB3) on the platelet surface and inhibits aggregation induced by ADP, thrombin, platelet-activating factor and collagen. In Agkistrodon piscivorus piscivorus (Eastern cottonmouth), this protein is Disintegrin applaggin.